The sequence spans 224 residues: uncharacterized protein (224 aa).

Residues H57, H59, D61, H62, H138, D162, and H203 each coordinate Zn(2+).

The protein belongs to the metallo-beta-lactamase superfamily. Glyoxalase II family. The cofactor is Zn(2+).

This is an uncharacterized protein from Mycobacterium tuberculosis (strain CDC 1551 / Oshkosh).